We begin with the raw amino-acid sequence, 340 residues long: Phenylalanine--tRNA ligase alpha subunit (340 aa).

Mg(2+) is bound at residue E258.

This sequence belongs to the class-II aminoacyl-tRNA synthetase family. Phe-tRNA synthetase alpha subunit type 1 subfamily. As to quaternary structure, tetramer of two alpha and two beta subunits. It depends on Mg(2+) as a cofactor.

It is found in the cytoplasm. It catalyses the reaction tRNA(Phe) + L-phenylalanine + ATP = L-phenylalanyl-tRNA(Phe) + AMP + diphosphate + H(+). This Corynebacterium glutamicum (strain ATCC 13032 / DSM 20300 / JCM 1318 / BCRC 11384 / CCUG 27702 / LMG 3730 / NBRC 12168 / NCIMB 10025 / NRRL B-2784 / 534) protein is Phenylalanine--tRNA ligase alpha subunit.